A 207-amino-acid polypeptide reads, in one-letter code: B2 protein (207 aa).

Residues 1-68 (MIDQEESNFN…FKTLPPAESL (68 aa)) form a disordered region. Low complexity-rich tracts occupy residues 8 to 26 (NFNFNFNQPQQPQQQQFHG) and 35 to 52 (KNNNNNSESGNKNGGENK). Residues 72 to 204 (ETVGGYIFVC…AISLLDIFEE (133 aa)) form the DCD domain.

The polypeptide is B2 protein (Daucus carota (Wild carrot)).